The chain runs to 493 residues: UDP-N-acetylmuramate--L-alanine ligase (493 aa).

112–118 is an ATP binding site; it reads GTHGKTT.

This sequence belongs to the MurCDEF family.

Its subcellular location is the cytoplasm. It catalyses the reaction UDP-N-acetyl-alpha-D-muramate + L-alanine + ATP = UDP-N-acetyl-alpha-D-muramoyl-L-alanine + ADP + phosphate + H(+). It functions in the pathway cell wall biogenesis; peptidoglycan biosynthesis. Functionally, cell wall formation. The polypeptide is UDP-N-acetylmuramate--L-alanine ligase (Nitrosospira multiformis (strain ATCC 25196 / NCIMB 11849 / C 71)).